The primary structure comprises 107 residues: uncharacterized protein (107 aa).

Residues 52–72 form a helical membrane-spanning segment; the sequence is LIIHDLFIYIFILNFFFFPFC.

It localises to the membrane. This is an uncharacterized protein from Saccharomyces cerevisiae (strain ATCC 204508 / S288c) (Baker's yeast).